The primary structure comprises 372 residues: Envelope phospholipase OPG057 (372 aa).

Positions 153–156 (YPPL) match the YPPL motif. 2 S-palmitoyl cysteine; by host lipidation sites follow: Cys-185 and Cys-186. A PLD phosphodiesterase domain is found at 307–334 (FTIQNNTKLLIVDDEYVHITSANFDGTH).

The protein belongs to the orthopoxvirus OPG057 family. Interacts with protein OPG190. In terms of processing, palmitoylated. Attachment of the palmitate moiety is essential for correct intracellular targeting and protein function.

The protein localises to the virion membrane. Its subcellular location is the host Golgi apparatus. It is found in the host trans-Golgi network. It localises to the host endoplasmic reticulum membrane. The catalysed reaction is a 1,2-diacyl-sn-glycero-3-phosphocholine + H2O = a 1,2-diacyl-sn-glycero-3-phosphate + choline + H(+). Functionally, major envelope protein that plays a role in the biogenesis of the viral double membrane and in egress of virus from the host cell. Produces the wrapped form of virus that is required for cell-to-cell spread. Acts as a lipase with broad specificity including phospholipase C, phospholipase A, and triacylglycerol lipase activities. The polypeptide is Envelope phospholipase OPG057 (OPG057) (Vaccinia virus (strain Copenhagen) (VACV)).